The following is a 288-amino-acid chain: 33 kDa chaperonin (288 aa).

2 disulfide bridges follow: Cys-237–Cys-239 and Cys-270–Cys-273.

Belongs to the HSP33 family. Under oxidizing conditions two disulfide bonds are formed involving the reactive cysteines. Under reducing conditions zinc is bound to the reactive cysteines and the protein is inactive.

It localises to the cytoplasm. Functionally, redox regulated molecular chaperone. Protects both thermally unfolding and oxidatively damaged proteins from irreversible aggregation. Plays an important role in the bacterial defense system toward oxidative stress. This is 33 kDa chaperonin from Agathobacter rectalis (strain ATCC 33656 / DSM 3377 / JCM 17463 / KCTC 5835 / VPI 0990) (Eubacterium rectale).